The chain runs to 527 residues: MYAYEALPVAEWFRRNRELAGFHNPTRALYQTIRELTENSLDATETYGILPTIYLRVNIEDEQKGWVSVYAEDNGIGIPGNEIPNVFGRVFYSSKYKIKQHRGVFGLGLKMVVLYSQSTTNKPVLVRSATLKSDKIYEYQIMIDTNSNSPIILDRREYPNRYKWHGTAVKVYLEGNWLAAKKRIEDYLKRTAIIAPYAEIVFKGPDLELWLKRRTTKLPPAPKEGLPHPKSVDVDTLKQMIQESRGLTLLEFLMENFDAVGEGTAKAFLEWAGFNPNAKVTALTPEELVKLVDKMKQYEGWRRPRSDWLSPAGAELLEIGAKAILGAEAVFAITRKPESYGGHPFIVEAAVAWGGQIPPADKPLLLRYANKIPLLYDEGADVARKVVDEFNWQNYKVKFPAPLAVIIHVCSTKIPYASAGKEAIAEVPEIEKEMKLALRDAAKKLRLYLSRKEKEMEMLNKYISLAKYVEEIAYNLSMITRIEKESLAKNLHTLIERKIGLTIEELVKHTLSMSSTSQEEVVEATPQ.

ATP-binding positions include Asn39, Asp73, 94–95 (SK), 103–110 (GVFGLGLK), and Lys421.

It belongs to the TOP6B family. Homodimer. Heterotetramer of two Top6A and two Top6B chains.

It carries out the reaction ATP-dependent breakage, passage and rejoining of double-stranded DNA.. Functionally, relaxes both positive and negative superturns and exhibits a strong decatenase activity. In Pyrobaculum aerophilum (strain ATCC 51768 / DSM 7523 / JCM 9630 / CIP 104966 / NBRC 100827 / IM2), this protein is Type 2 DNA topoisomerase 6 subunit B.